Here is a 544-residue protein sequence, read N- to C-terminus: Epidermal growth factor-like protein 6 (544 aa).

The signal sequence occupies residues Met1–Ser30. In terms of domain architecture, EGF-like 1 spans Arg63 to Asn98. 6 disulfide bridges follow: Cys67–Cys80, Cys71–Cys86, Cys88–Cys97, Cys104–Cys115, Cys111–Cys124, and Cys126–Cys138. The EGF-like 2; calcium-binding domain maps to Asp100–Ser139. The region spanning Cys144–Cys178 is the EGF-like 3 domain. One can recognise an EGF-like 4; calcium-binding domain in the interval Asp180 to Asn218. Intrachain disulfides connect Cys184/Cys197, Cys191/Cys206, Cys229/Cys242, Cys236/Cys251, and Cys253/Cys264. Residues Asp225–Ser265 enclose the EGF-like 5; calcium-binding domain. A disordered region spans residues Gly332 to Asn357. Positions Asn333–Gly367 form a coiled coil. The span at Asp334–Asn357 shows a compositional bias: acidic residues. The region spanning Val399 to Asp543 is the MAM domain.

It belongs to the nephronectin family.

It is found in the secreted. The protein localises to the extracellular space. Its subcellular location is the extracellular matrix. The protein resides in the basement membrane. Functionally, may play a role in organ morphogenesis. Promotes matrix assembly. The chain is Epidermal growth factor-like protein 6 (egfl6) from Xenopus laevis (African clawed frog).